The following is a 449-amino-acid chain: MKHITIIGAGLAGTLCGLYLARRGYEVELFESRPDIRNSPTDYGRSINLALSCRGITALKAMNLLSEVNKIMVPMRARAIHEANGEVHYQPFGRHIDEYINAISRSDLNALLLNKAELCPNIKLHFNMKLHSLDIHNKKIKFENKNGDFVEASYHRLIGADGAPSHVRDMLKNEGIVSASRDFLSHGYKELSISKKHTKGMAREHLHLWPRDSFMLLGNPNPDDSITGSLFLANEGKDSFAELNNEEKLHLFFKTQFPDAYAAMPNLVQEFFGNPTGHLSTIQCSPWYYKDECLLIGDAAHGIIPFFGQGMNSAFEDCRILDELLDEYQDDWSRVTPVFYEQRKVNTDAIAKMSMDNYHEIHSDIRNPKFILQKQIERELMLRYPEHYVSMHVLVMFTNTPYAKAMAIGELQSGLLEQICFPITDIKELNWQEVEKLLSIYDKKLAKII.

The protein belongs to the aromatic-ring hydroxylase family. KMO subfamily. FAD serves as cofactor.

It carries out the reaction L-kynurenine + NADPH + O2 + H(+) = 3-hydroxy-L-kynurenine + NADP(+) + H2O. It participates in cofactor biosynthesis; NAD(+) biosynthesis; quinolinate from L-kynurenine: step 1/3. Catalyzes the hydroxylation of L-kynurenine (L-Kyn) to form 3-hydroxy-L-kynurenine (L-3OHKyn). Required for synthesis of quinolinic acid. The chain is Kynurenine 3-monooxygenase from Legionella pneumophila (strain Corby).